The primary structure comprises 2601 residues: Centrosomal protein of 295 kDa (2601 aa).

Positions Met1–Ile560 are necessary for centriole targeting and microtubule association. The residue at position 14 (Ser14) is a Phosphoserine. Coiled-coil stretches lie at residues Lys207–Ala273 and Ala500–Lys552. Phosphoserine is present on residues Ser654 and Ser938. The tract at residues Pro1008–Leu1029 is disordered. The segment covering Lys1013 to Lys1027 has biased composition (basic and acidic residues). Coiled-coil stretches lie at residues Leu1053–Leu1082 and Ile1498–Glu1544. A disordered region spans residues Ala1558–Arg1580. The span at Lys1565 to Ser1577 shows a compositional bias: polar residues. Position 1637 is a phosphoserine (Ser1637). Positions Gln1728–Gln1758 form a coiled coil. Composition is skewed to basic and acidic residues over residues Arg1795–Arg1827, Phe1985–Glu2003, and Asp2100–Ser2112. 3 disordered regions span residues Arg1795–Val1834, Leu1979–Thr2004, and His2085–Ala2117. Position 2473 is a phosphothreonine (Thr2473). Residues Ser2478 to Cys2601 form an ALMS motif region. Residues Arg2556–Arg2581 are a coiled coil.

As to quaternary structure, interacts (via ALMS motif) with microtubules; this interaction is direct.

It localises to the cytoplasm. The protein localises to the cytoskeleton. Its subcellular location is the microtubule organizing center. It is found in the centrosome. The protein resides in the centriole. It localises to the spindle. Centriole-enriched microtubule-binding protein involved in centriole biogenesis. Essential for the generation of the distal portion of new-born centrioles in a CPAP- and CEP120-mediated elongation dependent manner during the cell cycle S/G2 phase after formation of the initiating cartwheel structure. Required for the recruitment of centriolar proteins, such as POC1B, POC5 and CEP135, into the distal portion of centrioles. Also required for centriole-to-centrosome conversion during mitotic progression, but is dispensable for cartwheel removal or centriole disengagement. Binds to and stabilizes centriolar microtubule. May be involved in ciliogenesis. The sequence is that of Centrosomal protein of 295 kDa from Homo sapiens (Human).